The following is a 319-amino-acid chain: Ferrochelatase (319 aa).

Positions 194 and 275 each coordinate Fe cation.

Belongs to the ferrochelatase family.

It is found in the cytoplasm. The catalysed reaction is heme b + 2 H(+) = protoporphyrin IX + Fe(2+). Its pathway is porphyrin-containing compound metabolism; protoheme biosynthesis; protoheme from protoporphyrin-IX: step 1/1. Functionally, catalyzes the ferrous insertion into protoporphyrin IX. The sequence is that of Ferrochelatase from Hamiltonella defensa subsp. Acyrthosiphon pisum (strain 5AT).